The chain runs to 822 residues: General transcription factor 3C polypeptide 4 (822 aa).

M1 carries the post-translational modification N-acetylmethionine. The interval 1-41 is disordered; that stretch reads MNTADQARVGPADDGPAPSGEEEGEGGGEAGGKEPAADAAP. A Phosphoserine modification is found at S19. A Glycyl lysine isopeptide (Lys-Gly) (interchain with G-Cter in SUMO2) cross-link involves residue K225. 2 positions are modified to phosphoserine: S604 and S611. Positions 608 to 663 are disordered; the sequence is LVDSPGMGNADDEQQEEGTSSKQVVKQGLQERSKEGDVEEPTDDSLPTTGDAGGRE. A Glycyl lysine isopeptide (Lys-Gly) (interchain with G-Cter in SUMO2) cross-link involves residue K629. S652 is subject to Phosphoserine.

It belongs to the TFIIIC subunit 4 family. As to quaternary structure, part of the TFIIIC subcomplex TFIIIC2, consisting of six subunits, GTF3C1, GTF3C2, GTF3C3, GTF3C4, GTF3C5 and GTF3C6. Interacts with BRF1, GTF3C1, GTF3C2, GTF3C5, GTF3C6, POLR3C and POLR3F.

The protein resides in the nucleus. It catalyses the reaction L-lysyl-[protein] + acetyl-CoA = N(6)-acetyl-L-lysyl-[protein] + CoA + H(+). In terms of biological role, essential for RNA polymerase III to make a number of small nuclear and cytoplasmic RNAs, including 5S RNA, tRNA, and adenovirus-associated (VA) RNA of both cellular and viral origin. Has histone acetyltransferase activity (HAT) with unique specificity for free and nucleosomal H3. May cooperate with GTF3C5 in facilitating the recruitment of TFIIIB and RNA polymerase through direct interactions with BRF1, POLR3C and POLR3F. May be localized close to the A box. The sequence is that of General transcription factor 3C polypeptide 4 (GTF3C4) from Homo sapiens (Human).